The primary structure comprises 144 residues: 3-dehydroquinate dehydratase (144 aa).

The active-site Proton acceptor is tyrosine 23. Asparagine 74, histidine 80, and aspartate 87 together coordinate substrate. Catalysis depends on histidine 100, which acts as the Proton donor. Substrate-binding positions include 101–102 and arginine 111; that span reads LS.

Belongs to the type-II 3-dehydroquinase family. In terms of assembly, homododecamer.

The enzyme catalyses 3-dehydroquinate = 3-dehydroshikimate + H2O. It participates in metabolic intermediate biosynthesis; chorismate biosynthesis; chorismate from D-erythrose 4-phosphate and phosphoenolpyruvate: step 3/7. Its function is as follows. Catalyzes a trans-dehydration via an enolate intermediate. The sequence is that of 3-dehydroquinate dehydratase from Haemophilus ducreyi (strain 35000HP / ATCC 700724).